A 94-amino-acid chain; its full sequence is Small ribosomal subunit protein uS19 (94 aa).

The protein belongs to the universal ribosomal protein uS19 family.

Functionally, protein S19 forms a complex with S13 that binds strongly to the 16S ribosomal RNA. The sequence is that of Small ribosomal subunit protein uS19 from Clostridium botulinum (strain Hall / ATCC 3502 / NCTC 13319 / Type A).